We begin with the raw amino-acid sequence, 75 residues long: Guanine nucleotide-binding protein G(I)/G(S)/G(O) subunit gamma-3 (75 aa).

Threonine 5 carries the phosphothreonine modification. The residue at position 9 (serine 9) is a Phosphoserine. Threonine 10 carries the post-translational modification Phosphothreonine. Serine 12 carries the post-translational modification Phosphoserine. The residue at position 72 (cysteine 72) is a Cysteine methyl ester. Cysteine 72 carries the S-geranylgeranyl cysteine lipid modification. The propeptide at 73-75 (ALL) is removed in mature form.

The protein belongs to the G protein gamma family. In terms of assembly, g proteins are composed of 3 units, alpha, beta and gamma. Forms a complex with GNAO1 and GNB1. Interacts with SCN8A. In terms of tissue distribution, abundantly expressed in brain. Low levels in testis.

The protein localises to the cell membrane. Functionally, guanine nucleotide-binding proteins (G proteins) are involved as a modulator or transducer in various transmembrane signaling systems. The beta and gamma chains are required for the GTPase activity, for replacement of GDP by GTP, and for G protein-effector interaction. This chain is Guanine nucleotide-binding protein G(I)/G(S)/G(O) subunit gamma-3 (GNG3), found in Bos taurus (Bovine).